Here is a 585-residue protein sequence, read N- to C-terminus: Putative sulfur deprivation response regulator (585 aa).

5 helical membrane passes run 5–25 (VVDA…RGII), 30–50 (AFAG…MIAA), 83–103 (VASV…IPVV), 117–137 (FMMP…IGTS), and 162–182 (IIGL…SPLL). RCK C-terminal domains follow at residues 189-274 (MMAA…LPGL) and 288-372 (ETVA…STEW). Helical transmembrane passes span 389–409 (LALF…SMDV), 411–431 (PLST…VLTV), 442–462 (ILLT…TGLA), 482–502 (VAAI…GAAV), and 561–581 (FGLP…VLYF).

The protein belongs to the CitM (TC 2.A.11) transporter family.

Its subcellular location is the membrane. Functionally, not known; mutations in SAC1 produces cells that cannot synthesize arylsulfatase and cannot take up sulfate as rapidly as wild-type cells. SAC1 is necessary for cells to survive sulfur deprivation. The sequence is that of Putative sulfur deprivation response regulator (SAC1) from Chlamydomonas reinhardtii (Chlamydomonas smithii).